Reading from the N-terminus, the 184-residue chain is Ras-related protein Rap-1b (184 aa).

10 to 17 is a binding site for GTP; it reads GSGGVGKS. The short motif at 32–40 is the Effector region element; that stretch reads YDPTIEDSY. Residues 57 to 61 and 116 to 119 contribute to the GTP site; these read DTAGT and NKCD. Cys181 bears the Cysteine methyl ester mark. Cys181 carries the S-geranylgeranyl cysteine lipid modification. Positions 182 to 184 are cleaved as a propeptide — removed in mature form; sequence HLL.

This sequence belongs to the small GTPase superfamily. Ras family.

Its subcellular location is the cell membrane. The protein localises to the cytoplasm. It is found in the cytosol. It localises to the cell junction. The enzyme catalyses GTP + H2O = GDP + phosphate + H(+). Functionally, probable GTP-binding protein that possesses GTPase activity. May play a role in endothelial cell polarity and endothelial barrier function. This is Ras-related protein Rap-1b (rap1b) from Xenopus laevis (African clawed frog).